Consider the following 551-residue polypeptide: Palmdelphin (551 aa).

M1 bears the N-acetylmethionine mark. Residues 12–106 (QAITDKRKIQ…LQISANEEVI (95 aa)) are a coiled coil. A Glycyl lysine isopeptide (Lys-Gly) (interchain with G-Cter in SUMO2) cross-link involves residue K125. Residues S135 and S163 each carry the phosphoserine modification. A Glycyl lysine isopeptide (Lys-Gly) (interchain with G-Cter in SUMO1); alternate cross-link involves residue K178. Residue K178 forms a Glycyl lysine isopeptide (Lys-Gly) (interchain with G-Cter in SUMO2); alternate linkage. The span at 247-258 (ERNSKSPTEYHE) shows a compositional bias: basic and acidic residues. Positions 247-267 (ERNSKSPTEYHEPVYANPFCR) are disordered. At T270 the chain carries Phosphothreonine. Disordered regions lie at residues 298–387 (HESE…CSSP) and 452–536 (EDDE…DPSL). Phosphoserine occurs at positions 322, 350, 371, 376, 385, and 386. Positions 484 to 495 (KRSEVSPHENTN) are enriched in basic and acidic residues. Phosphoserine occurs at positions 498, 515, and 520.

Belongs to the paralemmin family. Interacts with GLUL. Post-translationally, phosphorylated. In terms of tissue distribution, expressed in the brain and the spinal cord. Expressed in the anterior olfactory nucleus, the olfactory tubercle, the nucleus supraopticus, the nucleus of the lateral olfactory tract, the piriform cortex, the cortico-amygdaloid transition zone, the septofimbrial nucleus and the indusium griseum (at protein level).

The protein resides in the cytoplasm. It localises to the cell projection. Its subcellular location is the dendrite. The protein localises to the dendritic spine. The protein is Palmdelphin (Palmd) of Rattus norvegicus (Rat).